A 317-amino-acid polypeptide reads, in one-letter code: Melanocyte-stimulating hormone receptor (317 aa).

At 1-37 the chain is on the extracellular side; the sequence is MVWQGPQRRLLGSLNGTSPATPHFELAANQTGPRCLE. Asn15 and Asn29 each carry an N-linked (GlcNAc...) asparagine glycan. Residues 38–63 form a helical membrane-spanning segment; it reads VSIPNGLFLSLGLVSVVENVLVVAAI. Residues 64-72 lie on the Cytoplasmic side of the membrane; the sequence is AKNRNLHSP. Residues 73 to 93 form a helical membrane-spanning segment; it reads MYYFIGCLAVSDLLVSVTNVL. Topologically, residues 94–118 are extracellular; sequence ETAVMLLVEAGALAAQAAVVQQLDD. Residues 119-140 traverse the membrane as a helical segment; that stretch reads IIDVLICGSMVSSLCFLGAIAV. Over 141 to 163 the chain is Cytoplasmic; it reads DRYLSIFYALRYHSIVTLPRAWR. The helical transmembrane segment at 164 to 183 threads the bilayer; that stretch reads AISAIWVASVLSSTLFIAYY. Residues 184-191 lie on the Extracellular side of the membrane; that stretch reads NHTAVLLC. The helical transmembrane segment at 192–211 threads the bilayer; it reads LVSFFVAMLVLMAVLYVHML. The Cytoplasmic segment spans residues 212-240; sequence ARARQHARGIARLRKRQHSVHQGFGLKGA. Residues 241–266 traverse the membrane as a helical segment; sequence ATLTILLGIFFLCWGPFFLHLSLMVL. The Extracellular portion of the chain corresponds to 267-279; it reads CPQHPICGCVFQN. The chain crosses the membrane as a helical span at residues 280 to 300; the sequence is FNLFLTLIICNSIIDPFIYAF. Residues 301 to 317 are Cytoplasmic-facing; it reads RSQELRKTLQEVVLCSW. Cys315 is lipidated: S-palmitoyl cysteine.

The protein belongs to the G-protein coupled receptor 1 family. Interacts with MGRN1, but does not undergo MGRN1-mediated ubiquitination; this interaction competes with GNAS-binding and thus inhibits agonist-induced cAMP production. Interacts with OPN3; the interaction results in a decrease in MC1R-mediated cAMP signaling and ultimately a decrease in melanin production in melanocytes.

Its subcellular location is the cell membrane. In terms of biological role, receptor for MSH (alpha, beta and gamma) and ACTH. The activity of this receptor is mediated by G proteins which activate adenylate cyclase. Mediates melanogenesis, the production of eumelanin (black/brown) and phaeomelanin (red/yellow), via regulation of cAMP signaling in melanocytes. This chain is Melanocyte-stimulating hormone receptor (MC1R), found in Canis lupus familiaris (Dog).